Here is a 310-residue protein sequence, read N- to C-terminus: Conjugation stage-specific protein (310 aa).

It belongs to the archaeal Rpo3/eukaryotic RPB3 RNA polymerase subunit family.

The protein resides in the nucleus. In terms of biological role, may be a stage-specific RNA polymerase subunit. This chain is Conjugation stage-specific protein (CNJC), found in Tetrahymena thermophila.